The sequence spans 594 residues: Keratin, type II cytoskeletal 2 oral (594 aa).

The tract at residues 1–164 (MSRQACKKSF…DPQIGQVKAQ (164 aa)) is head. Omega-N-methylarginine occurs at positions 85 and 104. The coil 1A stretch occupies residues 165–200 (EREQIKTLNNKFASFIDKVRFLEQQNKVLETKWELL). An IF rod domain is found at 165–480 (EREQIKTLNN…KLLEGEECRL (316 aa)). The linker 1 stretch occupies residues 201–221 (QQQTIRSGSGPQNLEPFFESY). Residues 222 to 313 (ISCLRKQLDS…TLYDMELSQI (92 aa)) form a coil 1B region. Residues 314 to 337 (QSHVSDTSVVLSMDNNRCLDLDSI) are linker 12. Positions 338 to 476 (IAEVKAQYED…ATYRKLLEGE (139 aa)) are coil 2. Residues 477 to 594 (ECRLSGEFQN…TTSSSQQRSK (118 aa)) are tail. The interval 497 to 594 (TSTSSSGSFR…TTSSSQQRSK (98 aa)) is disordered. Gly residues predominate over residues 506–522 (RGTGGSNYGGDSSGRSG). Residues 523–551 (GSSSSSSRGSSSRGSSGSRLGSGGSISVS) show a composition bias toward low complexity. Residue Arg-541 is modified to Omega-N-methylarginine. Residues 552 to 564 (QQRMGFNSGGSQT) are compositionally biased toward polar residues. Over residues 565–594 (SVGSSYKSGRGGSSSVQFSQTTSSSQQRSK) the composition is skewed to low complexity.

The protein belongs to the intermediate filament family. Heterotetramer of two type I and two type II keratins.

Functionally, probably contributes to terminal cornification. This is Keratin, type II cytoskeletal 2 oral from Mus musculus (Mouse).